We begin with the raw amino-acid sequence, 669 residues long: Acetolactate synthase, mitochondrial (669 aa).

Residues 1–140 (MTVLAPLRRL…PRHEQAAGHA (140 aa)) constitute a mitochondrion transit peptide. Glutamate 134 lines the thiamine diphosphate pocket. FAD-binding positions include arginine 236, 351-372 (HGSG…LGVR), and 403-422 (DISP…IEGD). The thiamine pyrophosphate binding stretch occupies residues 497-577 (AHQMWAATFY…VKILILNNEE (81 aa)). Residues aspartate 548 and asparagine 575 each contribute to the Mg(2+) site.

It belongs to the TPP enzyme family. Mg(2+) is required as a cofactor. Thiamine diphosphate serves as cofactor.

It is found in the mitochondrion. It catalyses the reaction 2 pyruvate + H(+) = (2S)-2-acetolactate + CO2. It participates in amino-acid biosynthesis; L-isoleucine biosynthesis; L-isoleucine from 2-oxobutanoate: step 1/4. Its pathway is amino-acid biosynthesis; L-valine biosynthesis; L-valine from pyruvate: step 1/4. This chain is Acetolactate synthase, mitochondrial (ilv1), found in Schizosaccharomyces pombe (strain 972 / ATCC 24843) (Fission yeast).